Reading from the N-terminus, the 214-residue chain is MLERLNGLLMQAGIVITDTQKTQLVQLVELLHKWNKAYNLTSVRDPDAMLVKHILDSLVVSQHLHGERFIDVGTGPGLPGLPLAIINPDKQFVLLDSLGKRINFIRQVILELGLTNVTPVKSRVEEYQPEVGFDGVLSRAFASLEDMLSWCHHLPSAQGSFLALKGQFPEQELAQLPANIHLVASHQLVVPELEGERHLLEFKHIQPEQGRSFI.

S-adenosyl-L-methionine is bound by residues Gly73, Leu78, 124-125 (VE), and Arg139.

This sequence belongs to the methyltransferase superfamily. RNA methyltransferase RsmG family.

Its subcellular location is the cytoplasm. It carries out the reaction guanosine(527) in 16S rRNA + S-adenosyl-L-methionine = N(7)-methylguanosine(527) in 16S rRNA + S-adenosyl-L-homocysteine. Functionally, specifically methylates the N7 position of guanine in position 527 of 16S rRNA. The polypeptide is Ribosomal RNA small subunit methyltransferase G (Aeromonas hydrophila subsp. hydrophila (strain ATCC 7966 / DSM 30187 / BCRC 13018 / CCUG 14551 / JCM 1027 / KCTC 2358 / NCIMB 9240 / NCTC 8049)).